A 324-amino-acid polypeptide reads, in one-letter code: tRNA uridine(34) hydroxylase (324 aa).

The region spanning 127 to 221 is the Rhodanese domain; that stretch reads QQEETIVIDA…YGKDPEVQGE (95 aa). Cys181 serves as the catalytic Cysteine persulfide intermediate.

The protein belongs to the TrhO family.

The catalysed reaction is uridine(34) in tRNA + AH2 + O2 = 5-hydroxyuridine(34) in tRNA + A + H2O. Catalyzes oxygen-dependent 5-hydroxyuridine (ho5U) modification at position 34 in tRNAs. The protein is tRNA uridine(34) hydroxylase of Bacillus cytotoxicus (strain DSM 22905 / CIP 110041 / 391-98 / NVH 391-98).